A 330-amino-acid polypeptide reads, in one-letter code: Beta-ketoacyl-[acyl-carrier-protein] synthase III (330 aa).

Catalysis depends on residues C114 and H257. Residues Q258–R262 form an ACP-binding region. N287 is an active-site residue.

Belongs to the thiolase-like superfamily. FabH family. As to quaternary structure, homodimer.

The protein resides in the cytoplasm. It carries out the reaction malonyl-[ACP] + acetyl-CoA + H(+) = 3-oxobutanoyl-[ACP] + CO2 + CoA. It participates in lipid metabolism; fatty acid biosynthesis. Catalyzes the condensation reaction of fatty acid synthesis by the addition to an acyl acceptor of two carbons from malonyl-ACP. Catalyzes the first condensation reaction which initiates fatty acid synthesis and may therefore play a role in governing the total rate of fatty acid production. Possesses both acetoacetyl-ACP synthase and acetyl transacylase activities. Its substrate specificity determines the biosynthesis of branched-chain and/or straight-chain of fatty acids. This Nitratidesulfovibrio vulgaris (strain ATCC 29579 / DSM 644 / CCUG 34227 / NCIMB 8303 / VKM B-1760 / Hildenborough) (Desulfovibrio vulgaris) protein is Beta-ketoacyl-[acyl-carrier-protein] synthase III.